Consider the following 179-residue polypeptide: Large ribosomal subunit protein uL6 (179 aa).

This sequence belongs to the universal ribosomal protein uL6 family. As to quaternary structure, part of the 50S ribosomal subunit.

This protein binds to the 23S rRNA, and is important in its secondary structure. It is located near the subunit interface in the base of the L7/L12 stalk, and near the tRNA binding site of the peptidyltransferase center. The protein is Large ribosomal subunit protein uL6 of Mycobacterium sp. (strain KMS).